We begin with the raw amino-acid sequence, 79 residues long: Acyl carrier protein (79 aa).

Positions S2 to L77 constitute a Carrier domain. Position 37 is an O-(pantetheine 4'-phosphoryl)serine (S37).

Belongs to the acyl carrier protein (ACP) family. 4'-phosphopantetheine is transferred from CoA to a specific serine of apo-ACP by AcpS. This modification is essential for activity because fatty acids are bound in thioester linkage to the sulfhydryl of the prosthetic group.

It localises to the cytoplasm. Its pathway is lipid metabolism; fatty acid biosynthesis. Its function is as follows. Carrier of the growing fatty acid chain in fatty acid biosynthesis. The sequence is that of Acyl carrier protein from Alkalilimnicola ehrlichii (strain ATCC BAA-1101 / DSM 17681 / MLHE-1).